Reading from the N-terminus, the 241-residue chain is Small ribosomal subunit protein uS2 (241 aa).

It belongs to the universal ribosomal protein uS2 family.

The chain is Small ribosomal subunit protein uS2 from Sodalis glossinidius (strain morsitans).